A 303-amino-acid chain; its full sequence is ATP synthase subunit a (303 aa).

6 helical membrane passes run 59 to 79, 122 to 142, 148 to 168, 181 to 201, 220 to 240, and 244 to 264; these read HTVM…IWGN, FLLT…VPWM, NLAV…VAGI, TGGV…LGLF, IVYF…VAAV, and FAFA…YVFA. The segment covering 281–290 has biased composition (basic and acidic residues); it reads HDDHGHDHPE. The tract at residues 281 to 303 is disordered; it reads HDDHGHDHPEAGPSHDQGKAHHA.

This sequence belongs to the ATPase A chain family. F-type ATPases have 2 components, CF(1) - the catalytic core - and CF(0) - the membrane proton channel. CF(1) has five subunits: alpha(3), beta(3), gamma(1), delta(1), epsilon(1). CF(0) has three main subunits: a(1), b(2) and c(9-12). The alpha and beta chains form an alternating ring which encloses part of the gamma chain. CF(1) is attached to CF(0) by a central stalk formed by the gamma and epsilon chains, while a peripheral stalk is formed by the delta and b chains.

The protein resides in the cell inner membrane. In terms of biological role, key component of the proton channel; it plays a direct role in the translocation of protons across the membrane. This Myxococcus xanthus (strain DK1622) protein is ATP synthase subunit a.